Reading from the N-terminus, the 477-residue chain is UDP-N-acetylmuramate--L-alanine ligase (477 aa).

An ATP-binding site is contributed by 112 to 118; sequence GAHGKTT.

This sequence belongs to the MurCDEF family.

It is found in the cytoplasm. It carries out the reaction UDP-N-acetyl-alpha-D-muramate + L-alanine + ATP = UDP-N-acetyl-alpha-D-muramoyl-L-alanine + ADP + phosphate + H(+). The protein operates within cell wall biogenesis; peptidoglycan biosynthesis. Its function is as follows. Cell wall formation. The sequence is that of UDP-N-acetylmuramate--L-alanine ligase from Acidovorax ebreus (strain TPSY) (Diaphorobacter sp. (strain TPSY)).